The chain runs to 88 residues: Apolipoprotein C-I (88 aa).

Residues 1 to 26 (MRLFLSLPVLVVVLAMVLEGPAPTQA) form the signal peptide.

This sequence belongs to the apolipoprotein C1 family.

It localises to the secreted. Functionally, inhibitor of lipoprotein binding to the low density lipoprotein (LDL) receptor, LDL receptor-related protein, and very low density lipoprotein (VLDL) receptor. Associates with high density lipoproteins (HDL) and the triacylglycerol-rich lipoproteins in the plasma and makes up about 10% of the protein of the VLDL and 2% of that of HDL. Appears to interfere directly with fatty acid uptake and is also the major plasma inhibitor of cholesteryl ester transfer protein (CETP). Binds free fatty acids and reduces their intracellular esterification. Modulates the interaction of APOE with beta-migrating VLDL and inhibits binding of beta-VLDL to the LDL receptor-related protein. The protein is Apolipoprotein C-I (APOC1) of Mirounga angustirostris (Northern elephant seal).